Consider the following 144-residue polypeptide: uncharacterized protein (144 aa).

The region spanning 13-120 (IFCGIVEGNV…VPKYETGLGF (108 aa)) is the HIT domain. The Histidine triad motif signature appears at 105 to 109 (HYHMH).

This is an uncharacterized protein from Mycoplasma pneumoniae (strain ATCC 29342 / M129 / Subtype 1) (Mycoplasmoides pneumoniae).